We begin with the raw amino-acid sequence, 143 residues long: Large ribosomal subunit protein uL11 (143 aa).

The protein belongs to the universal ribosomal protein uL11 family. In terms of assembly, part of the ribosomal stalk of the 50S ribosomal subunit. Interacts with L10 and the large rRNA to form the base of the stalk. L10 forms an elongated spine to which L12 dimers bind in a sequential fashion forming a multimeric L10(L12)X complex. In terms of processing, one or more lysine residues are methylated.

In terms of biological role, forms part of the ribosomal stalk which helps the ribosome interact with GTP-bound translation factors. This is Large ribosomal subunit protein uL11 from Laribacter hongkongensis (strain HLHK9).